The primary structure comprises 1065 residues: MVAYLNIHTAYDLLNSSLKIEDAVRLAVSENVDALAITDTNVLYGFPKFYDACIANNIKPIFGMTIYVTNGLNTVETVVLAKNNDGLKDLYQLSSEIKMNALEHVSFELLKRFSNNMIIIFKKVGDQHRDIVQVFETHNDTYMDHLSISIQGRKHVWIQNVCYQTRQDADTISALAAIRDNTKLDLIHDQEDFGAHFLTEKEINQLDINQEYLTQVDVIAQKCDAELKYHQSLLPQYETPNDESAKKYLWRVLVTQLKKLELNYDVYLERLKYEYKVITNMGFEDYFLIVSDLIHYAKTNDVMVGPGRGSSAGSLVSYLLGITTIDPIKFNLLFERFLNPERVTMPDIDIDFEDTRRERVIQYVQEKYGELHVSGIVTFGHLLARAVARDVGRIMGFDEVTLNEISSLIPHKLGITLDEAYQIDDFKKFVHRNHRHERWFSICKKLEGLPRHTSTHAAGIIINDHPLYEYAPLTKGDTGLLTQWTMTEAERIGLLKIDFLGLRNLSIIHQILTQVKKDLGINIDIEKIPFDDQKVFELLSQGDTTGIFQLESDGVRSVLKKLKPEHFEDIVAVTSLYRPGPMEEIPTYITRRHDPSKVQYLHPHLEPILKNTYGVIIYQEQIMQIASTFANFSYGEADILRRAMSKKNRAVLESERQHFIEGAKQNGYHEDISKQIFDLILKFADYGFPRAHAVSYSKIAYIMSFLKVHYPNYFYANILSNVIGSEKKTAQMIEEAKKQGITILPPNINESHWFYKPSQEGIYLSIGTIKGVGYQSVKVIVDERYQNGKFKDFFDFARRIPKRVKTRKLLEALILVGAFDAFGKTRSTLLQAIDQVLDGDLNIEQDGFLFDILTPKQMYEDKEELPDALISQYEKEYLGFYVSQHPVDKKFVAKQYLTIFKLSNAQNNKPILVQFDKVKQIRTKNGQNMAFVTLNDGIETLDGVIFPNQFKKYEELLSHNDLFIVSGKFDHRKQQRQLIINEIQTLATFEEQKLAFAKQIIIRNKSQIDMFEEMIKATKENANDVVLSFYDETIKQMTTLGYINQKDSMFNNFIQSFNPSDIRLI.

Belongs to the DNA polymerase type-C family. DnaE subfamily. In terms of assembly, DNA polymerase III contains a core (composed of alpha, epsilon and theta chains) that associates with a tau subunit. This core dimerizes to form the PolIII' complex. PolIII' associates with the gamma complex (composed of gamma, delta, delta', psi and chi chains) and with the beta chain to form the complete DNA polymerase III complex.

Its subcellular location is the cytoplasm. It catalyses the reaction DNA(n) + a 2'-deoxyribonucleoside 5'-triphosphate = DNA(n+1) + diphosphate. Functionally, DNA polymerase III is a complex, multichain enzyme responsible for most of the replicative synthesis in bacteria. This DNA polymerase also exhibits 3' to 5' exonuclease activity. The alpha chain is the DNA polymerase. The chain is DNA polymerase III subunit alpha (dnaE) from Staphylococcus aureus (strain MSSA476).